Reading from the N-terminus, the 413-residue chain is Gamma-glutamyl phosphate reductase (413 aa).

It belongs to the gamma-glutamyl phosphate reductase family.

Its subcellular location is the cytoplasm. It carries out the reaction L-glutamate 5-semialdehyde + phosphate + NADP(+) = L-glutamyl 5-phosphate + NADPH + H(+). It participates in amino-acid biosynthesis; L-proline biosynthesis; L-glutamate 5-semialdehyde from L-glutamate: step 2/2. Catalyzes the NADPH-dependent reduction of L-glutamate 5-phosphate into L-glutamate 5-semialdehyde and phosphate. The product spontaneously undergoes cyclization to form 1-pyrroline-5-carboxylate. The polypeptide is Gamma-glutamyl phosphate reductase (Salinispora tropica (strain ATCC BAA-916 / DSM 44818 / JCM 13857 / NBRC 105044 / CNB-440)).